The following is a 465-amino-acid chain: Mothers against decapentaplegic homolog 5 (465 aa).

Threonine 2 bears the N-acetylthreonine mark. The MH1 domain occupies 13 to 137 (PAVKRLLGWK…YKRVESPVLP (125 aa)). Zn(2+)-binding residues include cysteine 65, cysteine 110, cysteine 122, and histidine 127. The disordered stretch occupies residues 163–251 (NEPHMPQNAT…DTSSNMIPQT (89 aa)). The segment covering 169–182 (QNATFPDSFHQPNN) has biased composition (polar residues). The span at 186 to 197 (PLSPNSPYPPSP) shows a compositional bias: pro residues. Residues 198-214 (ASSTYPNSPASSGPGSP) show a composition bias toward low complexity. Residues 237-251 (NSQPMDTSSNMIPQT) are compositionally biased toward polar residues. An MH2 domain is found at 271–465 (WCSIVYYELN…SPLNPISSVS (195 aa)). 2 positions are modified to phosphoserine: serine 463 and serine 465.

Belongs to the dwarfin/SMAD family. Homodimer. Forms trimers with the co-SMAD SMAD4. Interacts with PEBP2-alpha subunit and SMURF1. Interacts with SUV39H1 and SUV39H2. Interacts (via MH2 domain) with LEMD3. Interacts with WWP1. Interacts with TMEM119. Interacts with ZNF8. Interacts with RANBP3L. Interacts with HK1. Interacts with HGS; this interaction attenuates BMP signaling. Phosphorylated on serine by BMP (bone morphogenetic proteins) type 1 receptor kinase. Post-translationally, ubiquitin-mediated proteolysis by SMAD-specific E3 ubiquitin ligase SMURF1. In terms of tissue distribution, predominantly expressed in mesenchyme and somites during embryogenesis, and present in many tissues of the adult.

The protein localises to the cytoplasm. The protein resides in the nucleus. It localises to the mitochondrion. Its function is as follows. Transcriptional regulator that plays a role in various cellular processes including embryonic development, cell differentiation, angiogenesis and tissue homeostasis. Upon BMP ligand binding to their receptors at the cell surface, is phosphorylated by activated type I BMP receptors (BMPRIs) and associates with SMAD4 to form a heteromeric complex which translocates into the nucleus acting as transcription factor. In turn, the hetero-trimeric complex recognizes cis-regulatory elements containing Smad Binding Elements (SBEs) to modulate the outcome of the signaling network. Non-phosphorylated SMAD5 has a cytoplasmic role in energy metabolism regulation by promoting mitochondrial respiration and glycolysis in response to cytoplasmic pH changes. Mechanistically, interacts with hexokinase 1/HK1 and thereby accelerates glycolysis. The chain is Mothers against decapentaplegic homolog 5 (Smad5) from Mus musculus (Mouse).